Here is a 156-residue protein sequence, read N- to C-terminus: ATP synthase subunit b (156 aa).

A helical membrane pass occupies residues 7–27 (IFFQMLVFFVLGWFTMKFVWP).

It belongs to the ATPase B chain family. F-type ATPases have 2 components, F(1) - the catalytic core - and F(0) - the membrane proton channel. F(1) has five subunits: alpha(3), beta(3), gamma(1), delta(1), epsilon(1). F(0) has three main subunits: a(1), b(2) and c(10-14). The alpha and beta chains form an alternating ring which encloses part of the gamma chain. F(1) is attached to F(0) by a central stalk formed by the gamma and epsilon chains, while a peripheral stalk is formed by the delta and b chains.

Its subcellular location is the cell inner membrane. In terms of biological role, f(1)F(0) ATP synthase produces ATP from ADP in the presence of a proton or sodium gradient. F-type ATPases consist of two structural domains, F(1) containing the extramembraneous catalytic core and F(0) containing the membrane proton channel, linked together by a central stalk and a peripheral stalk. During catalysis, ATP synthesis in the catalytic domain of F(1) is coupled via a rotary mechanism of the central stalk subunits to proton translocation. Its function is as follows. Component of the F(0) channel, it forms part of the peripheral stalk, linking F(1) to F(0). This Bordetella pertussis (strain Tohama I / ATCC BAA-589 / NCTC 13251) protein is ATP synthase subunit b.